A 149-amino-acid chain; its full sequence is Large-conductance mechanosensitive channel (149 aa).

Helical transmembrane passes span 10–30 (FALK…GAFA), 41–61 (IMPI…MFLI), and 87–107 (GSFI…FMMV).

It belongs to the MscL family. As to quaternary structure, homopentamer.

The protein localises to the cell inner membrane. Channel that opens in response to stretch forces in the membrane lipid bilayer. May participate in the regulation of osmotic pressure changes within the cell. The chain is Large-conductance mechanosensitive channel from Psychrobacter cryohalolentis (strain ATCC BAA-1226 / DSM 17306 / VKM B-2378 / K5).